Reading from the N-terminus, the 367-residue chain is MSIRLIAVLSAASIAVTSATPVADSSCTISSFDQVASVLAECTDIVVSNLEVPAGETLNLETKKKGVTITFEGKTTFAYKEWTGPLLRVKGKAITVVGAKGSVLDGQGQLYWDGKGGNGGIKKPKFFKIKATEGSHFKNINLLNCPVQVHSIDHSGPLTLSGWNIDVSQGDKDALGHNTDGFDINTTDQLTIEDTVVKNQDDCIAVNQGTNFLFNNLDCSGGHGLSLSVGTSHEIIKNTVRNVTFSNSVVRKSRNGIHIKTTYQFRGRYPWRMLTYSNIAMEGIWKYAVNVEQDYKKGKPTGIPVGNIPIKGLHLEKVTGTLTGEESTPVYIICADGACSNFNWSGVSFEGASHASNCSYVPTGYSC.

The signal sequence occupies residues 1–19 (MSIRLIAVLSAASIAVTSA). A disulfide bond links C27 and C42. N-linked (GlcNAc...) asparagine glycosylation is present at N185. The PbH1 1 repeat unit spans residues 187–208 (TDQLTIEDTVVKNQDDCIAVNQ). Residue D201 is the Proton donor of the active site. C203 and C219 are oxidised to a cystine. H223 is an active-site residue. The PbH1 2 repeat unit spans residues 240 to 261 (VRNVTFSNSVVRKSRNGIHIKT). N-linked (GlcNAc...) asparagine glycosylation occurs at N242. C334 and C339 are joined by a disulfide. N-linked (GlcNAc...) asparagine glycans are attached at residues N343 and N357. A disulfide bridge connects residues C358 and C367.

This sequence belongs to the glycosyl hydrolase 28 family. As to expression, expressed in larval carcasses and gut, and adult gut.

Its subcellular location is the secreted. It is found in the cell wall. The enzyme catalyses (1,4-alpha-D-galacturonosyl)n+m + H2O = (1,4-alpha-D-galacturonosyl)n + (1,4-alpha-D-galacturonosyl)m.. This is Polygalacturonase from Phaedon cochleariae (Mustard beetle).